The primary structure comprises 505 residues: Catalase (505 aa).

A disordered region spans residues 1–25 (MSRQDKKLTGVFGHPVSDRENSMTA). Residues H56 and N129 contribute to the active site. Residue Y339 coordinates heme.

It belongs to the catalase family. In terms of assembly, homodimer. Heme serves as cofactor.

The catalysed reaction is 2 H2O2 = O2 + 2 H2O. Decomposes hydrogen peroxide into water and oxygen; serves to protect cells from the toxic effects of hydrogen peroxide. The polypeptide is Catalase (katA) (Staphylococcus aureus (strain MRSA252)).